Consider the following 320-residue polypeptide: Zinc finger protein 330 (320 aa).

The tract at residues 1–23 (MPKKKTGARKKAENRREREKQLR) is disordered. The Nuclear localization signal signature appears at 3-11 (KKKTGARKK). A compositionally biased stretch (basic and acidic residues) spans 10–22 (KKAENRREREKQL). C4-type zinc fingers lie at residues 42 to 58 (CDKC…CYFC), 67 to 104 (CAQC…CDFC), 129 to 149 (CVEC…CSFC), and 175 to 189 (CVSC…CLRC). Disordered regions lie at residues 206 to 250 (EKGK…ASGY) and 264 to 303 (GASY…TNLN). The span at 216–225 (CGHETQETKD) shows a compositional bias: basic and acidic residues. Residues 269 to 287 (DEEEDEYEAEDDEEEEDEG) show a composition bias toward acidic residues. S291 is modified (phosphoserine).

It belongs to the NOA36 family.

It is found in the nucleus. Its subcellular location is the nucleolus. The protein resides in the chromosome. The protein localises to the centromere. This Bos taurus (Bovine) protein is Zinc finger protein 330 (ZNF330).